The chain runs to 1204 residues: Exportin-5 (1204 aa).

The tract at residues 1–108 (MEMEQVNALC…ANGTLRILEE (108 aa)) is necessary for interaction with Ran. Residue K396 is modified to N6-acetyllysine. Residues 533 to 640 (ELLQLVLNFE…KQLLSNELLL (108 aa)) are necessary for interaction with ILF3. The pre-siRNA binding stretch occupies residues 641–642 (TQ).

This sequence belongs to the exportin family. In terms of assembly, component of a nuclear export receptor complex composed of XPO5, RAN, dsRNA-binding proteins and dsRNA. Found in a nuclear export complex with XPO5, RAN, EEF1A1, and aminoacylated tRNA. Found in a nuclear export complex with XPO5, RAN, ILF3 and dsRNA. Found in a nuclear export complex with XPO5, RAN and pre-miRNA. Found in a nuclear export complex with XPO5, RAN, ILF3 and minihelix VA1 dsRNA. Found in a nuclear export complex with XPO5, RAN, ILF3, ZNF346 and dsRNA. Interacts with EEF1A1, ILF3, NUP153, NUP214 and ZNF346. Interacts with RAN and cargo proteins in a GTP-dependent manner. Interacts with ADAR/ADAR1 (via DRBM domains). Interacts with SMAD4; mediates nuclear export of SMAD4. Interacts with RAN (GTP-bound form).

It is found in the nucleus. The protein resides in the cytoplasm. In terms of biological role, mediates the nuclear export of proteins bearing a double-stranded RNA binding domain (dsRBD) and double-stranded RNAs (cargos). XPO5 in the nucleus binds cooperatively to the RNA and to the GTPase Ran in its active GTP-bound form. Proteins containing dsRBDs can associate with this trimeric complex through the RNA. Docking of this complex to the nuclear pore complex (NPC) is mediated through binding to nucleoporins. Upon transit of a nuclear export complex into the cytoplasm, hydrolysis of Ran-GTP to Ran-GDP (induced by RANBP1 and RANGAP1, respectively) cause disassembly of the complex and release of the cargo from the export receptor. XPO5 then returns to the nuclear compartment by diffusion through the nuclear pore complex, to mediate another round of transport. The directionality of nuclear export is thought to be conferred by an asymmetric distribution of the GTP- and GDP-bound forms of Ran between the cytoplasm and nucleus. Overexpression may in some circumstances enhance RNA-mediated gene silencing (RNAi). Mediates nuclear export of ADAR/ADAR1 in a RanGTP-dependent manner. Functionally, mediates the nuclear export of micro-RNA precursors, which form short hairpins. Also mediates the nuclear export of synthetic short hairpin RNAs used for RNA interference. In some circumstances can also mediate the nuclear export of deacylated and aminoacylated tRNAs. Specifically recognizes dsRNAs that lack a 5'-overhang in a sequence-independent manner, have only a short 3'-overhang, and that have a double-stranded length of at least 15 base-pairs. Binding is dependent on Ran-GTP. The sequence is that of Exportin-5 (Xpo5) from Mus musculus (Mouse).